The following is a 566-amino-acid chain: Arginine--tRNA ligase (566 aa).

The 'HIGH' region signature appears at 121–131; that stretch reads ANPNGPFHIGH.

It belongs to the class-I aminoacyl-tRNA synthetase family.

The protein localises to the cytoplasm. It catalyses the reaction tRNA(Arg) + L-arginine + ATP = L-arginyl-tRNA(Arg) + AMP + diphosphate. The chain is Arginine--tRNA ligase from Methanococcus maripaludis (strain C5 / ATCC BAA-1333).